Reading from the N-terminus, the 260-residue chain is Type III pantothenate kinase (260 aa).

Position 6-13 (6-13 (DAGNTRIK)) interacts with ATP. Residues Tyr100 and 107 to 110 (GADR) each bind substrate. The active-site Proton acceptor is Asp109. Thr133 provides a ligand contact to ATP. Position 186 (Thr186) interacts with substrate.

This sequence belongs to the type III pantothenate kinase family. In terms of assembly, homodimer. NH4(+) serves as cofactor. K(+) is required as a cofactor.

The protein localises to the cytoplasm. The enzyme catalyses (R)-pantothenate + ATP = (R)-4'-phosphopantothenate + ADP + H(+). Its pathway is cofactor biosynthesis; coenzyme A biosynthesis; CoA from (R)-pantothenate: step 1/5. Catalyzes the phosphorylation of pantothenate (Pan), the first step in CoA biosynthesis. This is Type III pantothenate kinase from Janthinobacterium sp. (strain Marseille) (Minibacterium massiliensis).